Consider the following 370-residue polypeptide: Putative F-box protein At3g10430 (370 aa).

The 47-residue stretch at 1 to 47 (MGSSLPFDLILEILQRTPAESLLRFKSTCKKWYELISNDKRFMYKHL) folds into the F-box domain.

The polypeptide is Putative F-box protein At3g10430 (Arabidopsis thaliana (Mouse-ear cress)).